A 164-amino-acid chain; its full sequence is MVDDSTRKTLSNIPLLQIRAGPREKDVWVQRLKEEYQSLIKYVENNKQSGSDWFRLESNKEGTKWFGKCWYMHELLRYEFDVEFDIPVTYPTTAPEIALPELDGKTAKMYRGGKICLTDHFKPLWARNVPKFGIAHAMALGLAPWLAVEIPDLIEKGIITYKEK.

The Glycyl thioester intermediate role is filled by cysteine 116.

Belongs to the ubiquitin-conjugating enzyme family. UFC1 subfamily.

In terms of biological role, E2-like enzyme which forms an intermediate with UFM1 via a thioester linkage. The sequence is that of Ubiquitin-fold modifier-conjugating enzyme 1 from Drosophila ananassae (Fruit fly).